Here is a 206-residue protein sequence, read N- to C-terminus: Adenylyl-sulfate kinase (206 aa).

Residue glycine 36–serine 43 participates in ATP binding. Serine 110 (phosphoserine intermediate) is an active-site residue.

It belongs to the APS kinase family.

It carries out the reaction adenosine 5'-phosphosulfate + ATP = 3'-phosphoadenylyl sulfate + ADP + H(+). It functions in the pathway sulfur metabolism; hydrogen sulfide biosynthesis; sulfite from sulfate: step 2/3. Catalyzes the synthesis of activated sulfate. In Buchnera aphidicola subsp. Acyrthosiphon pisum (strain APS) (Acyrthosiphon pisum symbiotic bacterium), this protein is Adenylyl-sulfate kinase (cysC).